The chain runs to 240 residues: 1-(5-phosphoribosyl)-5-[(5-phosphoribosylamino)methylideneamino] imidazole-4-carboxamide isomerase (240 aa).

The active-site Proton acceptor is Asp8. The active-site Proton donor is the Asp129.

It belongs to the HisA/HisF family.

The protein resides in the cytoplasm. The catalysed reaction is 1-(5-phospho-beta-D-ribosyl)-5-[(5-phospho-beta-D-ribosylamino)methylideneamino]imidazole-4-carboxamide = 5-[(5-phospho-1-deoxy-D-ribulos-1-ylimino)methylamino]-1-(5-phospho-beta-D-ribosyl)imidazole-4-carboxamide. The protein operates within amino-acid biosynthesis; L-histidine biosynthesis; L-histidine from 5-phospho-alpha-D-ribose 1-diphosphate: step 4/9. This chain is 1-(5-phosphoribosyl)-5-[(5-phosphoribosylamino)methylideneamino] imidazole-4-carboxamide isomerase, found in Listeria welshimeri serovar 6b (strain ATCC 35897 / DSM 20650 / CCUG 15529 / CIP 8149 / NCTC 11857 / SLCC 5334 / V8).